Consider the following 214-residue polypeptide: Phosphoenolpyruvate guanylyltransferase (214 aa).

Residues Thr-148, Gly-163, and Ser-166 each contribute to the phosphoenolpyruvate site.

The protein belongs to the CofC family.

It catalyses the reaction phosphoenolpyruvate + GTP + H(+) = enolpyruvoyl-2-diphospho-5'-guanosine + diphosphate. Its pathway is cofactor biosynthesis; coenzyme F420 biosynthesis. Functionally, guanylyltransferase that catalyzes the activation of phosphoenolpyruvate (PEP) as enolpyruvoyl-2-diphospho-5'-guanosine, via the condensation of PEP with GTP. It is involved in the biosynthesis of coenzyme F420, a hydride carrier cofactor. This is Phosphoenolpyruvate guanylyltransferase from Mycobacterium tuberculosis (strain KZN 1435 / MDR).